Here is a 351-residue protein sequence, read N- to C-terminus: MPSQVIPEKQKAIVFYETDGKLEYKDVTVPEPKPNEILVHVKYSGVCHSDLHAWHGDWPFQLKFPLIGGHEGAGVVVKLGSNVKGWKVGDFAGIKWLNGTCMSCEYCEVGNESQCPYLDGTGFTHDGTFQEYATADAVQAAHIPPNVNLAEVAPILCAGITVYKALKRANVIPGQWVTISGACGGLGSLAIQYALAMGYRVIGIDGGNAKRKLFEQLGGEIFIDFTEEKDIVGAIIKATNGGSHGVINVSVSEAAIEASTRYCRPNGTVVLVGMPAHAYCNSDVFNQVVKSISIVGSCVGNRADTREALDFFARGLIKSPIHLAGLSDVPEIFAKMEKGEIVGRYVVETSK.

Zn(2+) contacts are provided by Cys47, His70, Cys101, Cys104, Cys107, Cys115, and Cys183. NAD(+) is bound by residues 181–187 (GACGGLG), Asp205, Lys210, 272–274 (VGM), and Arg344.

It belongs to the zinc-containing alcohol dehydrogenase family. The cofactor is Zn(2+).

It carries out the reaction a primary alcohol + NAD(+) = an aldehyde + NADH + H(+). The enzyme catalyses a secondary alcohol + NAD(+) = a ketone + NADH + H(+). The sequence is that of Alcohol dehydrogenase 5 (ADH5) from Saccharomyces pastorianus (Lager yeast).